We begin with the raw amino-acid sequence, 453 residues long: Tryptophan biosynthesis protein TrpCF (453 aa).

Positions methionine 1 to glutamate 257 are indole-3-glycerol phosphate synthase. The N-(5'-phosphoribosyl)anthranilate isomerase stretch occupies residues asparagine 258 to tyrosine 453.

It in the N-terminal section; belongs to the TrpC family. In the C-terminal section; belongs to the TrpF family. As to quaternary structure, monomer.

The catalysed reaction is N-(5-phospho-beta-D-ribosyl)anthranilate = 1-(2-carboxyphenylamino)-1-deoxy-D-ribulose 5-phosphate. It carries out the reaction 1-(2-carboxyphenylamino)-1-deoxy-D-ribulose 5-phosphate + H(+) = (1S,2R)-1-C-(indol-3-yl)glycerol 3-phosphate + CO2 + H2O. The protein operates within amino-acid biosynthesis; L-tryptophan biosynthesis; L-tryptophan from chorismate: step 3/5. It participates in amino-acid biosynthesis; L-tryptophan biosynthesis; L-tryptophan from chorismate: step 4/5. In terms of biological role, bifunctional enzyme that catalyzes two sequential steps of tryptophan biosynthetic pathway. The first reaction is catalyzed by the isomerase, coded by the TrpF domain; the second reaction is catalyzed by the synthase, coded by the TrpC domain. The chain is Tryptophan biosynthesis protein TrpCF (trpC) from Escherichia coli (strain K12).